Consider the following 117-residue polypeptide: Large ribosomal subunit protein bL20c (117 aa).

Belongs to the bacterial ribosomal protein bL20 family.

The protein localises to the plastid. Its subcellular location is the chloroplast. Functionally, binds directly to 23S ribosomal RNA and is necessary for the in vitro assembly process of the 50S ribosomal subunit. It is not involved in the protein synthesizing functions of that subunit. The chain is Large ribosomal subunit protein bL20c from Draba nemorosa (Woodland whitlowgrass).